Consider the following 168-residue polypeptide: uncharacterized protein (168 aa).

The segment at residues 1–21 is a signal peptide (or 19); it reads MKLLKALAVLSLATISSHSFA.

This is an uncharacterized protein from Haemophilus influenzae (strain ATCC 51907 / DSM 11121 / KW20 / Rd).